The chain runs to 344 residues: Ferrochelatase (344 aa).

Fe cation is bound by residues His211 and Glu292.

This sequence belongs to the ferrochelatase family.

Its subcellular location is the cytoplasm. The enzyme catalyses heme b + 2 H(+) = protoporphyrin IX + Fe(2+). The protein operates within porphyrin-containing compound metabolism; protoheme biosynthesis; protoheme from protoporphyrin-IX: step 1/1. Its function is as follows. Catalyzes the ferrous insertion into protoporphyrin IX. The sequence is that of Ferrochelatase from Methylobacillus flagellatus (strain ATCC 51484 / DSM 6875 / VKM B-1610 / KT).